We begin with the raw amino-acid sequence, 625 residues long: DNA-directed RNA polymerase subunit gamma (625 aa).

4 residues coordinate Zn(2+): Cys71, Cys73, Cys86, and Cys89. Residues Asp467, Asp469, and Asp471 each contribute to the Mg(2+) site.

This sequence belongs to the RNA polymerase beta' chain family. RpoC1 subfamily. In terms of assembly, in cyanobacteria the RNAP catalytic core is composed of 2 alpha, 1 beta, 1 beta', 1 gamma and 1 omega subunit. When a sigma factor is associated with the core the holoenzyme is formed, which can initiate transcription. Requires Mg(2+) as cofactor. Zn(2+) is required as a cofactor.

The catalysed reaction is RNA(n) + a ribonucleoside 5'-triphosphate = RNA(n+1) + diphosphate. Functionally, DNA-dependent RNA polymerase catalyzes the transcription of DNA into RNA using the four ribonucleoside triphosphates as substrates. The protein is DNA-directed RNA polymerase subunit gamma of Rippkaea orientalis (strain PCC 8801 / RF-1) (Cyanothece sp. (strain PCC 8801)).